Consider the following 200-residue polypeptide: Large ribosomal subunit protein uL4 (200 aa).

The segment at 44–71 (AQKTRAEVSGGGKKPWRQKGTGRARAGS) is disordered.

Belongs to the universal ribosomal protein uL4 family. As to quaternary structure, part of the 50S ribosomal subunit.

In terms of biological role, one of the primary rRNA binding proteins, this protein initially binds near the 5'-end of the 23S rRNA. It is important during the early stages of 50S assembly. It makes multiple contacts with different domains of the 23S rRNA in the assembled 50S subunit and ribosome. Forms part of the polypeptide exit tunnel. This is Large ribosomal subunit protein uL4 from Psychrobacter sp. (strain PRwf-1).